A 256-amino-acid polypeptide reads, in one-letter code: MTFDFDVITLFPEMFNAVTRYGVTGRANENAIYRLYTWNPREFTEDNYRRVDDRPYGGGPGMVMLAEPLEKAITAARERQRACGIGSTKVVYLSPQGRPLNQNVVMELSELSALVLLAGRYEGVDERLIERQVDYEISIGDYVVSGGELASMVLMDCVVRQLPGVLGDPESANQDSFTAGLLDFPHYTRPEVYRGSVVPEVLLSGNHARIERWRLQQSLGRTWLRRPDLLALKMEKGLTAEERKLLEEFQHAYEAN.

Residues G119 and 139–144 contribute to the S-adenosyl-L-methionine site; that span reads IGDYVV.

This sequence belongs to the RNA methyltransferase TrmD family. Homodimer.

Its subcellular location is the cytoplasm. The enzyme catalyses guanosine(37) in tRNA + S-adenosyl-L-methionine = N(1)-methylguanosine(37) in tRNA + S-adenosyl-L-homocysteine + H(+). Its function is as follows. Specifically methylates guanosine-37 in various tRNAs. The sequence is that of tRNA (guanine-N(1)-)-methyltransferase from Nitrosospira multiformis (strain ATCC 25196 / NCIMB 11849 / C 71).